Here is a 278-residue protein sequence, read N- to C-terminus: Urease accessory protein UreD (278 aa).

Belongs to the UreD family. In terms of assembly, ureD, UreF and UreG form a complex that acts as a GTP-hydrolysis-dependent molecular chaperone, activating the urease apoprotein by helping to assemble the nickel containing metallocenter of UreC. The UreE protein probably delivers the nickel.

The protein localises to the cytoplasm. Its function is as follows. Required for maturation of urease via the functional incorporation of the urease nickel metallocenter. The sequence is that of Urease accessory protein UreD from Pseudomonas putida (strain ATCC 700007 / DSM 6899 / JCM 31910 / BCRC 17059 / LMG 24140 / F1).